A 324-amino-acid polypeptide reads, in one-letter code: Homocysteine S-methyltransferase 1 (324 aa).

One can recognise a Hcy-binding domain in the interval 6–320; that stretch reads IKELIVEHPG…KDIAEIASAV (315 aa). Zn(2+)-binding residues include C238, C305, and C306.

Zn(2+) is required as a cofactor.

The protein resides in the cytoplasm. The enzyme catalyses S-methyl-L-methionine + L-homocysteine = 2 L-methionine + H(+). In terms of biological role, homocysteine S-methyltransferase involved in the conversion of S-adenosylmethionine (AdoMet) to methionine to control the methionine/AdoMet ratio. Also converts S-methylmethionine (SMM) to methionine. The polypeptide is Homocysteine S-methyltransferase 1 (MHT1) (Saccharomyces cerevisiae (strain ATCC 204508 / S288c) (Baker's yeast)).